The following is a 33-amino-acid chain: Dermaseptin-H8 (33 aa).

Leucine 33 bears the Leucine amide mark.

In terms of tissue distribution, expressed by the skin glands.

Its subcellular location is the secreted. Its function is as follows. Has antimicrobial activity. The protein is Dermaseptin-H8 of Pithecopus hypochondrialis (Orange-legged leaf frog).